A 643-amino-acid chain; its full sequence is Mediator of RNA polymerase II transcription subunit 17 (643 aa).

The disordered stretch occupies residues 53-82 (SDSEEDGAERARAGREQWKQEPEEDEGQLK). Residues 60–73 (AERARAGREQWKQE) are compositionally biased toward basic and acidic residues.

This sequence belongs to the Mediator complex subunit 17 family. Component of the Mediator complex.

The protein resides in the nucleus. Its function is as follows. Component of the Mediator complex, a coactivator involved in the regulated transcription of nearly all RNA polymerase II-dependent genes. Mediator functions as a bridge to convey information from gene-specific regulatory proteins to the basal RNA polymerase II transcription machinery. Mediator is recruited to promoters by direct interactions with regulatory proteins and serves as a scaffold for the assembly of a functional preinitiation complex with RNA polymerase II and the general transcription factors. The chain is Mediator of RNA polymerase II transcription subunit 17 (med17) from Danio rerio (Zebrafish).